A 473-amino-acid chain; its full sequence is MKTDTPSLETPQAARLRRRQLIRQLLERDKTPLAILFMAAVVGTLVGLAAVAFDKGVAWLQNQRMGALVHTADNYPLLLTVAFLCSAVLAMFGYFLVRKYAPEAGGSGIPEIEGALEDQRPVRWWRVLPVKFFGGLGTLGGGMVLGREGPTVQIGGNIGRMVLDVFRLKGDEARHTLLATGAAAGLAAAFNAPLAGILFIIEEMRPQFRYTLISIKAVFIGVIMSTIMYRIFNHEVALIDVGKLSDAPLNTLWLYLILGIIFGIFGPIFNKWVLGMQDLLHRVHGGNITKWVLMGGAIGGLCGLLGFVAPATSGGGFNLIPIATAGNFSMGMLVFIFVARVITTLLCFSSGAPGGIFAPMLALGTVLGTAFGMVAVELFPQYHLEAGTFAIAGMGALLAASIRAPLTGIILVLEMTDNYQLILPMIITGLGATLLAQFTGGKPLYSAILARTLAKQEAEQLARSKAASARENT.

Residues 1-32 (MKTDTPSLETPQAARLRRRQLIRQLLERDKTP) are Cytoplasmic-facing. A helical transmembrane segment spans residues 33-69 (LAILFMAAVVGTLVGLAAVAFDKGVAWLQNQRMGALV). Residues 70-76 (HTADNYP) lie on the Periplasmic side of the membrane. A helical membrane pass occupies residues 77-100 (LLLTVAFLCSAVLAMFGYFLVRKY). Positions 106 to 110 (GSGIP) match the Selectivity filter part_1 motif. Ser107 is a chloride binding site. Positions 109 to 116 (IPEIEGAL) form an intramembrane region, helical. Residues 117 to 123 (EDQRPVR) are Cytoplasmic-facing. Helical transmembrane passes span 124–141 (WWRV…TLGG) and 148–166 (EGPT…LDVF). The short motif at 146-150 (GREGP) is the Selectivity filter part_2 element. At 167 to 176 (RLKGDEARHT) the chain is on the cytoplasmic side. Intramembrane regions (helical) lie at residues 177 to 189 (LLAT…LAAA) and 193 to 201 (PLAGILFII). Residues 202–214 (EEMRPQFRYTLIS) lie on the Cytoplasmic side of the membrane. A helical transmembrane segment spans residues 215 to 232 (IKAVFIGVIMSTIMYRIF). At 233–252 (NHEVALIDVGKLSDAPLNTL) the chain is on the periplasmic side. Residues 253–281 (WLYLILGIIFGIFGPIFNKWVLGMQDLLH) traverse the membrane as a helical segment. Over 282 to 287 (RVHGGN) the chain is Cytoplasmic. Residues 288–309 (ITKWVLMGGAIGGLCGLLGFVA) traverse the membrane as a helical segment. Topologically, residues 310-329 (PATSGGGFNLIPIATAGNFS) are periplasmic. 2 helical membrane passes run 330-349 (MGML…LCFS) and 355-376 (GIFA…MVAV). Residues 355–359 (GIFAP) carry the Selectivity filter part_3 motif. Residues Ile356 and Phe357 each contribute to the chloride site. The Periplasmic portion of the chain corresponds to 377-386 (ELFPQYHLEA). Positions 387 to 401 (GTFAIAGMGALLAAS) form an intramembrane region, helical. The note=Loop between two helices intramembrane region spans 402-404 (IRA). The segment at residues 405-416 (PLTGIILVLEMT) is an intramembrane region (helical). The note=Loop between two helices intramembrane region spans 417–421 (DNYQL). The helical transmembrane segment at 422 to 438 (ILPMIITGLGATLLAQF) threads the bilayer. Residues 439–473 (TGGKPLYSAILARTLAKQEAEQLARSKAASARENT) lie on the Cytoplasmic side of the membrane. Residue Tyr445 coordinates chloride.

This sequence belongs to the chloride channel (TC 2.A.49) family. ClcA subfamily. Homodimer.

The protein resides in the cell inner membrane. It catalyses the reaction 2 chloride(in) + H(+)(out) = 2 chloride(out) + H(+)(in). Functionally, proton-coupled chloride transporter. Functions as antiport system and exchanges two chloride ions for 1 proton. Probably acts as an electrical shunt for an outwardly-directed proton pump that is linked to amino acid decarboxylation, as part of the extreme acid resistance (XAR) response. The sequence is that of H(+)/Cl(-) exchange transporter ClcA from Escherichia coli O45:K1 (strain S88 / ExPEC).